We begin with the raw amino-acid sequence, 202 residues long: Putative 3-methyladenine DNA glycosylase (202 aa).

The protein belongs to the DNA glycosylase MPG family.

This chain is Putative 3-methyladenine DNA glycosylase, found in Clostridioides difficile (strain 630) (Peptoclostridium difficile).